Consider the following 97-residue polypeptide: Conotoxin Cal6.1a (97 aa).

Positions 1–22 (MKLTTVLVVALLVLAACQFTVT) are cleaved as a signal peptide. Residues 23 to 46 (DNSGDDPENPSLRSVGENQNPDST) form a disordered region. Residues 23–68 (DNSGDDPENPSLRSVGENQNPDSTKTITAWATRDMTNMRRGLNRPS) constitute a propeptide that is removed on maturation. 3 disulfide bridges follow: Cys-71–Cys-87, Cys-78–Cys-91, and Cys-86–Cys-96.

Belongs to the conotoxin O1 superfamily. In terms of tissue distribution, expressed by the venom duct.

It localises to the secreted. Functionally, probable neurotoxin with unknown target. Possibly targets ion channels. This Californiconus californicus (California cone) protein is Conotoxin Cal6.1a.